The chain runs to 1250 residues: Probable autotransporter YfaL (1250 aa).

The signal sequence occupies residues 1-28 (MRIIFLRKEYLSLLPSMIASLFSANGVA). The segment at 914–951 (RSQEVTPPSPPDPDPTPDPDPTPDPDPTPDPEPTPAYQ) is disordered. Repeat 1 spans residues 919-920 (TP). Positions 919–948 (TPPSPPDPDPTPDPDPTPDPDPTPDPEPTP) are 15 X 2 AA approximate tandem repeats of [DTPE]-P. Residues 921-922 (PS) form a 2; approximate repeat. Repeat 3 spans residues 923-924 (PP). One copy of the 4; approximate repeat lies at 925–926 (DP). Tandem repeats lie at residues 927–928 (DP), 929–930 (TP), 931–932 (DP), 933–934 (DP), 935–936 (TP), 937–938 (DP), 939–940 (DP), 941–942 (TP), 943–944 (DP), 945–946 (EP), and 947–948 (TP). Residues 928–942 (PTPDPDPTPDPDPTP) show a composition bias toward acidic residues. The Autotransporter domain occupies 980 to 1250 (AGGDGQTLNL…AGFLSMTVKW (271 aa)).

An approximately 170 kDa protein is detected in the outer membrane, while a C-terminal 55 kDa fragment is detected in whole cells. The full-length putative autotransporter may be cleaved to release the mature protein from the outer membrane; Pefabloc SC, a Ser-Thr protease inhibitor prevents the appearance of the 55 kDa C--terminal fragment.

The protein resides in the periplasm. It is found in the secreted. It localises to the cell surface. Its subcellular location is the cell outer membrane. Probably an autotransporter. Upon overexpression shows increased adherence to polyvinyl chloride (PVC) plates, increased mature biofilm formation. The protein is Probable autotransporter YfaL (yfaL) of Escherichia coli (strain K12).